The sequence spans 843 residues: Adenylate cyclase (843 aa).

The tract at residues methionine 1–isoleucine 542 is catalytic. Positions serine 549–lysine 843 are regulatory.

This sequence belongs to the adenylyl cyclase class-1 family.

The protein localises to the cytoplasm. It carries out the reaction ATP = 3',5'-cyclic AMP + diphosphate. Plays an essential role in competence development. The polypeptide is Adenylate cyclase (cyaA) (Haemophilus influenzae (strain ATCC 51907 / DSM 11121 / KW20 / Rd)).